The sequence spans 202 residues: Small ribosomal subunit protein uS4 (202 aa).

Residues 18–42 (LPGLTRKAAKRSYPPGQHGQARRKR) form a disordered region. The S4 RNA-binding domain maps to 90 to 152 (NRLDNVCFRL…KPSKKLAETN (63 aa)).

Belongs to the universal ribosomal protein uS4 family. In terms of assembly, part of the 30S ribosomal subunit. Contacts protein S5. The interaction surface between S4 and S5 is involved in control of translational fidelity.

One of the primary rRNA binding proteins, it binds directly to 16S rRNA where it nucleates assembly of the body of the 30S subunit. Its function is as follows. With S5 and S12 plays an important role in translational accuracy. The protein is Small ribosomal subunit protein uS4 of Synechococcus sp. (strain RCC307).